The primary structure comprises 258 residues: Probable dihydroorotate dehydrogenase B (NAD(+)), electron transfer subunit (258 aa).

An FAD-binding FR-type domain is found at 1–90 (MRPISATIKE…RGPYGNGWEI (90 aa)). [2Fe-2S] cluster-binding residues include Cys-210, Cys-215, Cys-218, and Cys-228.

This sequence belongs to the PyrK family. Heterotetramer of 2 PyrK and 2 PyrD type B subunits. Requires [2Fe-2S] cluster as cofactor. It depends on FAD as a cofactor.

Its pathway is pyrimidine metabolism; UMP biosynthesis via de novo pathway; orotate from (S)-dihydroorotate (NAD(+) route): step 1/1. In terms of biological role, responsible for channeling the electrons from the oxidation of dihydroorotate from the FMN redox center in the PyrD type B subunit to the ultimate electron acceptor NAD(+). The polypeptide is Probable dihydroorotate dehydrogenase B (NAD(+)), electron transfer subunit (Methanocella arvoryzae (strain DSM 22066 / NBRC 105507 / MRE50)).